Here is a 297-residue protein sequence, read N- to C-terminus: Beta-1,3-galactosyltransferase 5 (297 aa).

The Cytoplasmic portion of the chain corresponds to M1–R7. Residues L8–L28 traverse the membrane as a helical; Signal-anchor for type II membrane protein segment. The Lumenal portion of the chain corresponds to N29–Q297. N-linked (GlcNAc...) asparagine glycosylation is found at N130, N174, and N231.

It belongs to the glycosyltransferase 31 family.

It localises to the golgi apparatus membrane. It catalyses the reaction a globoside Gb4Cer (d18:1(4E)) + UDP-alpha-D-galactose = a globoside GalGb4Cer (d18:1(4E)) + UDP + H(+). It participates in protein modification; protein glycosylation. Catalyzes the transfer of Gal to GlcNAc-based acceptors with a preference for the core3 O-linked glycan GlcNAc(beta1,3)GalNAc structure. Can use glycolipid LC3Cer as an efficient acceptor. The chain is Beta-1,3-galactosyltransferase 5 (B3GALT5) from Pan troglodytes (Chimpanzee).